The following is a 269-amino-acid chain: Signal recognition particle receptor subunit beta (269 aa).

A helical transmembrane segment spans residues 35-55; that stretch reads LLSVAVAVLAVLLTLVFWKFI. Residues 69–77 and 90–93 each bind GTP; these read GLCDSGKTL and TQTS. Serine 110 carries the post-translational modification Phosphoserine. Glycine 118 provides a ligand contact to GTP. A Phosphothreonine modification is found at threonine 212. Residue alanine 246 participates in GTP binding.

Belongs to the SRP receptor beta subunit family. In terms of assembly, heterodimer with SRPRA.

The protein resides in the endoplasmic reticulum membrane. Functionally, component of the signal recognition particle (SRP) complex receptor (SR). Ensures, in conjunction with the SRP complex, the correct targeting of the nascent secretory proteins to the endoplasmic reticulum membrane system. May mediate the membrane association of SR. This Rattus norvegicus (Rat) protein is Signal recognition particle receptor subunit beta (Srprb).